The sequence spans 96 residues: Aspartyl/glutamyl-tRNA(Asn/Gln) amidotransferase subunit C (96 aa).

It belongs to the GatC family. As to quaternary structure, heterotrimer of A, B and C subunits.

It catalyses the reaction L-glutamyl-tRNA(Gln) + L-glutamine + ATP + H2O = L-glutaminyl-tRNA(Gln) + L-glutamate + ADP + phosphate + H(+). It carries out the reaction L-aspartyl-tRNA(Asn) + L-glutamine + ATP + H2O = L-asparaginyl-tRNA(Asn) + L-glutamate + ADP + phosphate + 2 H(+). Functionally, allows the formation of correctly charged Asn-tRNA(Asn) or Gln-tRNA(Gln) through the transamidation of misacylated Asp-tRNA(Asn) or Glu-tRNA(Gln) in organisms which lack either or both of asparaginyl-tRNA or glutaminyl-tRNA synthetases. The reaction takes place in the presence of glutamine and ATP through an activated phospho-Asp-tRNA(Asn) or phospho-Glu-tRNA(Gln). The polypeptide is Aspartyl/glutamyl-tRNA(Asn/Gln) amidotransferase subunit C (Chloroflexus aggregans (strain MD-66 / DSM 9485)).